Here is a 470-residue protein sequence, read N- to C-terminus: UDP-N-acetylmuramoylalanine--D-glutamate ligase (470 aa).

121–127 (GTNGKST) lines the ATP pocket.

This sequence belongs to the MurCDEF family.

The protein resides in the cytoplasm. The enzyme catalyses UDP-N-acetyl-alpha-D-muramoyl-L-alanine + D-glutamate + ATP = UDP-N-acetyl-alpha-D-muramoyl-L-alanyl-D-glutamate + ADP + phosphate + H(+). Its pathway is cell wall biogenesis; peptidoglycan biosynthesis. Functionally, cell wall formation. Catalyzes the addition of glutamate to the nucleotide precursor UDP-N-acetylmuramoyl-L-alanine (UMA). In Rhizobium etli (strain ATCC 51251 / DSM 11541 / JCM 21823 / NBRC 15573 / CFN 42), this protein is UDP-N-acetylmuramoylalanine--D-glutamate ligase.